The sequence spans 129 residues: UPF0325 protein Spro_3794 (129 aa).

Belongs to the UPF0325 family.

The chain is UPF0325 protein Spro_3794 from Serratia proteamaculans (strain 568).